The sequence spans 461 residues: Cysteine--tRNA ligase (461 aa).

Cysteine 28 contributes to the Zn(2+) binding site. The 'HIGH' region motif lies at 30-40 (ITVYDLCHIGH). Zn(2+)-binding residues include cysteine 209, histidine 234, and glutamate 238. Residues 266-270 (KMSKS) carry the 'KMSKS' region motif. Residue lysine 269 coordinates ATP.

Belongs to the class-I aminoacyl-tRNA synthetase family. Monomer. The cofactor is Zn(2+).

Its subcellular location is the cytoplasm. It carries out the reaction tRNA(Cys) + L-cysteine + ATP = L-cysteinyl-tRNA(Cys) + AMP + diphosphate. In Klebsiella pneumoniae (strain 342), this protein is Cysteine--tRNA ligase.